We begin with the raw amino-acid sequence, 265 residues long: Hydroxyethylthiazole kinase 1 (265 aa).

M39 lines the substrate pocket. ATP is bound by residues K115 and T168. G195 provides a ligand contact to substrate.

It belongs to the Thz kinase family. It depends on Mg(2+) as a cofactor.

The enzyme catalyses 5-(2-hydroxyethyl)-4-methylthiazole + ATP = 4-methyl-5-(2-phosphooxyethyl)-thiazole + ADP + H(+). It functions in the pathway cofactor biosynthesis; thiamine diphosphate biosynthesis; 4-methyl-5-(2-phosphoethyl)-thiazole from 5-(2-hydroxyethyl)-4-methylthiazole: step 1/1. In terms of biological role, catalyzes the phosphorylation of the hydroxyl group of 4-methyl-5-beta-hydroxyethylthiazole (THZ). This chain is Hydroxyethylthiazole kinase 1, found in Clostridium botulinum (strain Loch Maree / Type A3).